Reading from the N-terminus, the 157-residue chain is Transcription antitermination protein NusB (157 aa).

It belongs to the NusB family.

Involved in transcription antitermination. Required for transcription of ribosomal RNA (rRNA) genes. Binds specifically to the boxA antiterminator sequence of the ribosomal RNA (rrn) operons. In Xylella fastidiosa (strain M12), this protein is Transcription antitermination protein NusB.